Consider the following 273-residue polypeptide: Large ribosomal subunit protein uL2c (273 aa).

2 disordered regions span residues 30 to 55 (EKKL…RHRG) and 222 to 243 (GSAM…PIGR). A compositionally biased stretch (basic residues) spans 45–55 (NKGRITTRHRG).

This sequence belongs to the universal ribosomal protein uL2 family. As to quaternary structure, part of the 50S ribosomal subunit.

The protein resides in the plastid. The chain is Large ribosomal subunit protein uL2c (rpl2) from Prototheca wickerhamii.